The chain runs to 829 residues: DNA topoisomerase 1 (829 aa).

Residues 1 to 248 are disordered; sequence MSEDHVQNDS…AKGNEEGVKK (248 aa). Basic residues predominate over residues 22–36; it reads HKHKKDKEHRHKEHK. Basic and acidic residues-rich tracts occupy residues 37–58, 68–159, and 193–220; these read KDKD…SEKK, KHRE…EKMK, and KENK…DDKK. Interaction with DNA stretches follow at residues 481–482, 544–549, and 641–643; these read KY, RAGNEK, and TAK. Residues 488 to 821 form the Topo IB-type catalytic domain; sequence SSRIKGEKDW…SIWQTTTSNF (334 aa). Tyr779 acts as the O-(3'-phospho-DNA)-tyrosine intermediate in catalysis.

The protein belongs to the type IB topoisomerase family. Monomer.

Its subcellular location is the nucleus. It carries out the reaction ATP-independent breakage of single-stranded DNA, followed by passage and rejoining.. Functionally, releases the supercoiling and torsional tension of DNA introduced during the DNA replication and transcription by transiently cleaving and rejoining one strand of the DNA duplex. Introduces a single-strand break via transesterification at a target site in duplex DNA. The scissile phosphodiester is attacked by the catalytic tyrosine of the enzyme, resulting in the formation of a DNA-(3'-phosphotyrosyl)-enzyme intermediate and the expulsion of a 5'-OH DNA strand. TThe free DNA strand then rotates around the intact phosphodiester bond on the opposing strand, thus removing DNA supercoils. Finally, in the religation step, the DNA 5'-OH attacks the covalent intermediate to expel the active-site tyrosine and restore the DNA phosphodiester backbone. May play a role in the circadian transcription of the core circadian clock component BMAL1. The sequence is that of DNA topoisomerase 1 (top1) from Xenopus laevis (African clawed frog).